Consider the following 779-residue polypeptide: Protocadherin beta-8 (779 aa).

The signal sequence occupies residues 1-28 (METALTKTPEKRQVIFLAILLLLWEASS). Over 29–690 (EAISYSMPEE…QEEDMLTLYL (662 aa)) the chain is Extracellular. 5 Cadherin domains span residues 75-133 (LQLD…FPEF), 134-242 (PDTE…APQF), 243-346 (LQSL…APKL), 347-450 (TISS…APAF), and 451-560 (TQTS…APFV). Cysteine 96 and cysteine 102 are joined by a disulfide. The N-linked (GlcNAc...) asparagine glycan is linked to asparagine 169. Serine 223 is a glycosylation site (O-linked (Man) serine). O-linked (Man) threonine glycans are attached at residues threonine 225 and threonine 227. Asparagine 417 carries an N-linked (GlcNAc...) asparagine glycan. N-linked (GlcNAc...) asparagine glycosylation is present at asparagine 566. Positions 575 to 675 (LPRAAEPGYL…SQPYLPLPEV (101 aa)) constitute a Cadherin 6 domain. A helical membrane pass occupies residues 691–711 (VIALASVSSLFLLSVLLFVGV). The Cytoplasmic portion of the chain corresponds to 712-779 (KLCKKAREAS…IIPSSLLQDS (68 aa)).

As to quaternary structure, forms homodimers in trans (molecules expressed by two different cells). Forms promiscuous heterodimers in cis (at the plasma membrane of the same cell) with other protocadherins.

The protein resides in the cell membrane. Functionally, calcium-dependent cell-adhesion protein involved in cells self-recognition and non-self discrimination. Thereby, it is involved in the establishment and maintenance of specific neuronal connections in the brain. This Mus musculus (Mouse) protein is Protocadherin beta-8.